We begin with the raw amino-acid sequence, 526 residues long: Glucose-6-phosphate isomerase (526 aa).

Glutamate 347 acts as the Proton donor in catalysis. Catalysis depends on residues histidine 378 and lysine 493.

It belongs to the GPI family.

It localises to the cytoplasm. The catalysed reaction is alpha-D-glucose 6-phosphate = beta-D-fructose 6-phosphate. It functions in the pathway carbohydrate biosynthesis; gluconeogenesis. It participates in carbohydrate degradation; glycolysis; D-glyceraldehyde 3-phosphate and glycerone phosphate from D-glucose: step 2/4. Functionally, catalyzes the reversible isomerization of glucose-6-phosphate to fructose-6-phosphate. This chain is Glucose-6-phosphate isomerase, found in Chlamydia pneumoniae (Chlamydophila pneumoniae).